A 66-amino-acid chain; its full sequence is Beta-mammal toxin Co1 (66 aa).

The region spanning 1–66 (KEGYLVNHST…VWPLPKKTCN (66 aa)) is the LCN-type CS-alpha/beta domain. 4 cysteine pairs are disulfide-bonded: Cys-12/Cys-65, Cys-16/Cys-41, Cys-25/Cys-46, and Cys-29/Cys-48.

Expressed by the venom gland.

The protein resides in the secreted. In terms of biological role, beta toxins bind voltage-independently at site-4 of sodium channels (Nav) and shift the voltage of activation toward more negative potentials thereby affecting sodium channel activation and promoting spontaneous and repetitive firing. This toxin acts on human Nav1.6/SCN8A voltage-gated sodium channels. In vivo, is lethal to mice 40 minutes after intraperitoneal injection at a dose of 5ug. No activity is observed when injected into crickets or woodlice. In Centruroides ornatus (Scorpion), this protein is Beta-mammal toxin Co1.